Consider the following 101-residue polypeptide: Citrate lyase acyl carrier protein (101 aa).

At serine 14 the chain carries O-(phosphoribosyl dephospho-coenzyme A)serine.

Belongs to the CitD family. In terms of assembly, oligomer with a subunit composition of (alpha,beta,gamma)6.

Its subcellular location is the cytoplasm. Its function is as follows. Covalent carrier of the coenzyme of citrate lyase. This chain is Citrate lyase acyl carrier protein, found in Lacticaseibacillus casei (strain BL23) (Lactobacillus casei).